The following is a 140-amino-acid chain: Putative peptidyl-tRNA hydrolase PTRHD1 (140 aa).

It belongs to the PTH2 family. PTRHD1 subfamily.

The enzyme catalyses an N-acyl-L-alpha-aminoacyl-tRNA + H2O = an N-acyl-L-amino acid + a tRNA + H(+). Its function is as follows. As a putative peptidyl-tRNA hydrolase, it might be involved in releasing tRNAs from the ribosome during protein synthesis. Some evidence, however, suggests that it lacks peptidyl-tRNA hydrolase activity. This is Putative peptidyl-tRNA hydrolase PTRHD1 (PTRHD1) from Homo sapiens (Human).